We begin with the raw amino-acid sequence, 284 residues long: Tropomyosin (284 aa).

A coiled-coil region spans residues 1–284 (MDSIKKKMMA…DTTFAELTSF (284 aa)). Positions 97-140 (EDFEQSSGRLTETSTKLDDASKAAEESERNRKTLETRSISDDER) are disordered. Positions 101–110 (QSSGRLTETS) are enriched in polar residues. Positions 111 to 140 (TKLDDASKAAEESERNRKTLETRSISDDER) are enriched in basic and acidic residues.

The protein belongs to the tropomyosin family. As to quaternary structure, homodimer.

Its function is as follows. Tropomyosin, in association with the troponin complex, plays a central role in the calcium dependent regulation of muscle contraction. This Echinococcus multilocularis (Fox tapeworm) protein is Tropomyosin.